The primary structure comprises 553 residues: Putative transport protein YidE (553 aa).

A run of 5 helical transmembrane segments spans residues 4–24 (IALT…IGNI), 28–48 (GVGF…HFVD), 65–85 (FGLI…FFAS), 95–115 (LFAV…HKIF), and 158–178 (MSYA…MWLM). 2 RCK C-terminal domains span residues 192-276 (KHES…VIGK) and 279-361 (DTSL…VVGN). A run of 6 helical transmembrane segments spans residues 371-391 (MLPV…PLFV), 393-413 (GFPV…ALIL), 437-457 (LGIV…FVDT), 464-484 (LSWI…VGLL), 493-513 (YLTL…LAFA), and 533-553 (LVMF…WGMG).

The protein belongs to the AAE transporter (TC 2.A.81) family. YidE subfamily.

The protein localises to the cell membrane. The chain is Putative transport protein YidE from Salmonella heidelberg (strain SL476).